Reading from the N-terminus, the 1342-residue chain is DNA-directed RNA polymerase subunit beta (1342 aa).

It belongs to the RNA polymerase beta chain family. In terms of assembly, the RNAP catalytic core consists of 2 alpha, 1 beta, 1 beta' and 1 omega subunit. When a sigma factor is associated with the core the holoenzyme is formed, which can initiate transcription.

It catalyses the reaction RNA(n) + a ribonucleoside 5'-triphosphate = RNA(n+1) + diphosphate. Its function is as follows. DNA-dependent RNA polymerase catalyzes the transcription of DNA into RNA using the four ribonucleoside triphosphates as substrates. In Klebsiella pneumoniae (strain 342), this protein is DNA-directed RNA polymerase subunit beta.